Consider the following 658-residue polypeptide: Threonine--tRNA ligase (658 aa).

The region spanning 1 to 64 is the TGS domain; it reads MSCSVSLSFP…GQSGQIEIIT (64 aa). The segment at 246-549 is catalytic; that stretch reads DHRRLGREMD…LIENFAGHMP (304 aa). The Zn(2+) site is built by Cys-343, His-394, and His-526.

It belongs to the class-II aminoacyl-tRNA synthetase family. Homodimer. Requires Zn(2+) as cofactor.

It is found in the cytoplasm. It carries out the reaction tRNA(Thr) + L-threonine + ATP = L-threonyl-tRNA(Thr) + AMP + diphosphate + H(+). Functionally, catalyzes the attachment of threonine to tRNA(Thr) in a two-step reaction: L-threonine is first activated by ATP to form Thr-AMP and then transferred to the acceptor end of tRNA(Thr). Also edits incorrectly charged L-seryl-tRNA(Thr). This is Threonine--tRNA ligase from Bartonella quintana (strain Toulouse) (Rochalimaea quintana).